The following is a 661-amino-acid chain: Zinc finger protein 81 (661 aa).

Residues 21–92 (VSFEDVTVDF…EGEAPHQSCS (72 aa)) form the KRAB domain. K266 participates in a covalent cross-link: Glycyl lysine isopeptide (Lys-Gly) (interchain with G-Cter in SUMO2). C2H2-type zinc fingers lie at residues 330-352 (YICT…EKTH), 358-380 (YKCN…QTTH), 386-408 (FECS…QKIH), 414-436 (HKCS…QRIH), 442-464 (YICT…QRIH), 470-492 (YECS…KRIH), 498-520 (YICT…QKSH), 526-548 (YICA…QTIH), 554-576 (YVCA…QRIH), 582-604 (YKCP…QRIH), 610-632 (YICA…QTIH), and 638-660 (YKCS…RNIH).

It belongs to the krueppel C2H2-type zinc-finger protein family.

It is found in the nucleus. Functionally, may be involved in transcriptional regulation. This is Zinc finger protein 81 (ZNF81) from Homo sapiens (Human).